Consider the following 249-residue polypeptide: Uridylate kinase (249 aa).

Lys21 to Gly24 is a binding site for ATP. Residue Gly63 coordinates UMP. Residues Gly64 and Arg68 each coordinate ATP. UMP is bound by residues Asp84 and Thr145–Thr152. Residues Thr172, Tyr178, and Asp181 each contribute to the ATP site.

Belongs to the UMP kinase family. In terms of assembly, homohexamer.

The protein resides in the cytoplasm. It carries out the reaction UMP + ATP = UDP + ADP. It participates in pyrimidine metabolism; CTP biosynthesis via de novo pathway; UDP from UMP (UMPK route): step 1/1. Inhibited by UTP. Catalyzes the reversible phosphorylation of UMP to UDP. This is Uridylate kinase from Francisella tularensis subsp. tularensis (strain FSC 198).